We begin with the raw amino-acid sequence, 40 residues long: MADTTGRIPLWIIGTVAGILVIGLVGIFFYGSYSGLGSSL.

The helical transmembrane segment at 8 to 28 (IPLWIIGTVAGILVIGLVGIF) threads the bilayer.

Belongs to the PsbJ family. In terms of assembly, PSII is composed of 1 copy each of membrane proteins PsbA, PsbB, PsbC, PsbD, PsbE, PsbF, PsbH, PsbI, PsbJ, PsbK, PsbL, PsbM, PsbT, PsbX, PsbY, PsbZ, Psb30/Ycf12, at least 3 peripheral proteins of the oxygen-evolving complex and a large number of cofactors. It forms dimeric complexes.

It localises to the plastid. It is found in the chloroplast thylakoid membrane. Its function is as follows. One of the components of the core complex of photosystem II (PSII). PSII is a light-driven water:plastoquinone oxidoreductase that uses light energy to abstract electrons from H(2)O, generating O(2) and a proton gradient subsequently used for ATP formation. It consists of a core antenna complex that captures photons, and an electron transfer chain that converts photonic excitation into a charge separation. The protein is Photosystem II reaction center protein J of Spinacia oleracea (Spinach).